Reading from the N-terminus, the 102-residue chain is Large ribosomal subunit protein uL24 (102 aa).

Belongs to the universal ribosomal protein uL24 family. Part of the 50S ribosomal subunit.

Functionally, one of two assembly initiator proteins, it binds directly to the 5'-end of the 23S rRNA, where it nucleates assembly of the 50S subunit. One of the proteins that surrounds the polypeptide exit tunnel on the outside of the subunit. The protein is Large ribosomal subunit protein uL24 of Alcanivorax borkumensis (strain ATCC 700651 / DSM 11573 / NCIMB 13689 / SK2).